The following is a 3574-amino-acid chain: MTSSSHNIELEAAKFLHKLIQDSKDEPAKLATKLYVILQHMKTSGKENTMPYQVISRAMDTVVNQHGLDIEALKSSCLPHPGGTQTEDSGSAHLAGSSQAVGVSNEGKATLVENEMTKYDAFTSGRQLGGSNSASQTFYQGSGTQSNRSFDRESPSNLDSTSGISQPHNRSETMNQRDVKSSGKRKRGESSLSWDQNMDNSQIFDSHKIDDQTGEVSKIEMPGNSGDIRNLHVGLSSDAFTTPQCGWQSSEATAIRPAIHKEPGNNVAGEGFLPSGSPFREQQLKQLRAQCLVFLALRNGLVPKKLHVEIALRNTFREEDGFRGELFDPKGRTHTSSDLGGIPDVSALLSRTDNPTGRLDEMDFSSKETERSRLGEKSFANTVFSDGQKLLASRIPSSQAQTQVAVSHSQLTFSPGLTKNTPSEMVGWTGVIKTNDLSTSAVQLDEFHSSDEEEGNLQPSPKYTMSQKWIMGRQNKRLLVDRSWSLKQQKADQAIGSRFNELKESVSLSDDISAKTKSVIELKKLQLLNLQRRLRSEFVYNFFKPIATDVEHLKSYKKHKHGRRIKQLEKYEQKMKEERQRRIRERQKEFFGGLEVHKEKLEDLFKVRRERLKGFNRYAKEFHKRKERLHREKIDKIQREKINLLKINDVEGYLRMVQDAKSDRVKQLLKETEKYLQKLGSKLKEAKLLTSRFENEADETRTSNATDDETLIENEDESDQAKHYLESNEKYYLMAHSIKENINEQPSSLVGGKLREYQMNGLRWLVSLYNNHLNGILADEMGLGKTVQVISLICYLMETKNDRGPFLVVVPSSVLPGWQSEINFWAPSIHKIVYCGTPDERRKLFKEQIVHQKFNVLLTTYEYLMNKHDRPKLSKIHWHYIIIDEGHRIKNASCKLNADLKHYVSSHRLLLTGTPLQNNLEELWALLNFLLPNIFNSSEDFSQWFNKPFQSNGESSAEEALLSEEENLLIINRLHQVLRPFVLRRLKHKVENELPEKIERLIRCEASAYQKLLMKRVEDNLGSIGNAKSRAVHNSVMELRNICNHPYLSQLHSEEVNNIIPKHFLPPIVRLCGKLEMLDRMLPKLKATDHRVLFFSTMTRLLDVMEDYLTLKGYKYLRLDGQTSGGDRGALIDGFNKSGSPFFIFLLSIRAGGVGVNLQAADTVILFDTDWNPQVDLQAQARAHRIGQKKDVLVLRFETVNSVEEQVRASAEHKLGVANQSITAGFFDNNTSAEDRKEYLESLLRESKKEEDAPVLDDDALNDLIARRESEIDIFESIDKQRKENEMETWNTLVHGPGSDSFAHIPSIPSRLVTEDDLKLLYETMKLNDVPMVAKESTVGMKRKDGSMGGLDTHQYGRGKRAREVRSYEEKLTEEEFEKLCQTESPDSPQGKGEGSERSLANDTSNIPVENSSDTLLPTSPTQAITVQPMEPVRPQSHTLKEETQPIKRGRGRPKRTDKALTPVSLSAVSRTQATGNAISSAATGLDFVSSDKRLEAASHPTSSLALTSPDLSGPPGFQSLPASPAPTPIRGRGRGRSRGRGAGRGRRVEGVLHGSNSSITQRTETATSLASDAEATKFALPRSASEIVSRVPKANEGSTSNPDQVSPVHSATTALRSDKAADKDLDAPPGFDSGSHVQTLNVLENSSERKAFAVKKRPLIQGVSSQHPGPNKQPLDLPVSTSSTLLGGGPVQNQNAVSSVCDGSKSPSEGRTYTALQGVTTAPSDATLPMSSQPSDATLPMSSQPVGSTVEAQEANVPSLPAALPAKRRVRNLPSRGETPKRQGKRRGQPLPATDASSARSTGLTPQIEVKVGNLSGTKAKFDAVAKEQPHFSQSVAPDIHSSGSLSQEIRRDTSGTGGSARKQTADVTDVARVMKEIFSETSLLKHKVGEPSATTRTNVPDAQSPGEMNLHTVETHKAEDSSGLKNQEALYNLSKADKLVSDIPHPVPGDLTTSGSVANKDVDIGSSKVAAENELVKIPGGDVDSSVIQLSLGNTLTAKSSLEKCTADQLLGEKLSQEGETTPASDGETCHLAEETASSLSYVRSEPTASASTTAEPLPTDKLEKNISFQDEVKTLNGDKREAILLSSEEQTNVNSKIETNSEELQASRTDEVPHVDGKSVDVANQTVKEDEAKHSVEIQSSMLEPDELPNAGQKGHSSIDLQPLVLVTSNENAMSLDDKDYDPISKSADIEQDPEESVFVQGVGRPKVGTADTQMEDTNDAKLLVGCSVESEEKEKTLQSLIPGDDADTEQDPEESVSDQRPKVGSAYTQMEDTDEAKLLMGCSVESEEKEKTLQSHIPGDDADTEKNPEESVSVQGVDRPKVGTTDTQMEDTNDAKLLVGCSVASEEKEKTLQSHIPGDDADTEQNPEESVSVQGVNRPKVGNANTQMEDTDEAKVLVGCSVESEEKEKTLQSHIPGDDADTEQNPEESVSNFDRPKDGTADTHMEDIDDAKLLVGCSVESEEKEKSLQSHMPSDDAVLHAPFENTKDSKGDDLHGESLVSCPTMEVMEQKGFESETHARTDSGGIDRGNEVSENMSDGVKMNISSVQVPDASHDLNVSQDQTDIPLVGGIDPEHVQENVDVPASPHGAAPNIVIFQSEGHLSPSILPDDVAGQLESMSNDEKTNISSEQVPDVSHDLKVSQDQTDIPPVGGIVPENLQEIVDVPASPHGVVPDVVVSQSEEIQSPSILPDDVPGQPDDGNCEKMDTMQNNTSIDIGITSGKTCQPSSSTQPEDENRNSLSHCEPSEVVEQRDSRDQVCIGSVESQVEISSAILENRSADIQPPQSILVDQKDIEESKEPGIESADVSLHQLADIQAEPSNLVDQMDIEESKEPGTESADVSLHQLADIQPGPSILVDQMDTEKSKEPGTESADVSLHQLADIQPGPSILVDQMDTEKSKEPGTESADVSLHQLADIQPGPSILVDQMDTEEFKNPDVSLHQLADIEPSLSISAVQKNIEDKDQSHVETAGSELVDVSAECSTEPQVQLPPSSEPVGDMHVHLGASKSEIVAEGTDFSSSLPKTEEENAKSQLADTEPSSSLTAVQKNIEDQVETAGCEFVVVSTGCSTEPQVQLPPSAEPVVAEGTEFPSSLLMTGVDNSSHLMTGVDNAKTHLADVVPSSSPTTMEKNIEAQDQDQVTTGGCGLVDVLTECSSEPQLQLPPSAEPVISEGTELATLPLTEEENADSQLANIEPSSSPSVVEKNIEAQDQDQVKTAGCELVSTGCSSEPQVHLPPSAEPDGDIHVHLKETEKSESMVVVGEGTAFPSSLPVTEEGNAESQLADTEPFTSPTVVEKNIKDQEQVETTGCGLVDDSTGCSSEPQVQLPPSAEPMEGTHMHLEETKKSETVVTEIQLADIDPSFSLIVVQTNIEDQDQIETGGCDLINVPSGCSTEPQIQLSSSAEPEEGMHIHLEAAMNSETVVTEGSELPSSLPMTEDENADGQLAEVEPSVSLTVEQTNIEEKDHIETAECELVDVSPGCSSQPEVKFPPSPDAVGGMDVHLETVVTEDTDSNSSLPKTEEKDAENPSDRLDGESDGTTVATVEGTCVESNSLVAEESNIEVPKDNEDV.

3 disordered regions span residues 76–105 (SCLPHPGGTQTEDSGSAHLAGSSQAVGVSN), 123–211 (TSGR…KIDD), and 328–372 (DPKG…TERS). 2 stretches are compositionally biased toward polar residues: residues 124-148 (SGRQLGGSNSASQTFYQGSGTQSNR) and 155-168 (PSNLDSTSGISQPH). Positions 169-181 (NRSETMNQRDVKS) are enriched in basic and acidic residues. Polar residues predominate over residues 194–204 (WDQNMDNSQIF). The segment covering 358–372 (RLDEMDFSSKETERS) has biased composition (basic and acidic residues). Positions 573–647 (QKMKEERQRR…QREKINLLKI (75 aa)) constitute an HSA domain. The Helicase ATP-binding domain occupies 766–933 (VSLYNNHLNG…WALLNFLLPN (168 aa)). 779 to 786 (DEMGLGKT) is a binding site for ATP. The DEAH box signature appears at 884–887 (DEGH). Positions 1077-1223 (MLDRMLPKLK…KLGVANQSIT (147 aa)) constitute a Helicase C-terminal domain. The Nuclear localization signal signature appears at 1266–1273 (ARRESEID). Disordered regions lie at residues 1342-1472 (KRKD…VSRT), 1500-1575 (HPTS…SDAE), 1588-1637 (IVSR…SGSH), 1690-1811 (GPVQ…QIEV), 1830-1868 (QPHFSQSVAPDIHSSGSLSQEIRRDTSGTGGSARKQTAD), 2040-2068 (SSLSYVRSEPTASASTTAEPLPTDKLEKN), 2089-2115 (SSEEQTNVNSKIETNSEELQASRTDEV), 2143-2162 (SSMLEPDELPNAGQKGHSSI), 2179-2220 (LDDK…QMED), 2235-2338 (EEKE…DTND), 2350-2451 (EEKE…HMED), 2517-2538 (FESETHARTDSGGIDRGNEVSE), 2684-2703 (SEEIQSPSILPDDVPGQPDD), 2718-2759 (IDIG…RDSR), 2865-2884 (DTEKSKEPGTESADVSLHQL), 3017-3045 (EGTDFSSSLPKTEEENAKSQLADTEPSSS), 3189-3208 (NADSQLANIEPSSSPSVVEK), 3316-3337 (VDDSTGCSSEPQVQLPPSAEPM), and 3512-3574 (TEDT…NEDV). Residues 1362 to 1371 (AREVRSYEEK) show a composition bias toward basic and acidic residues. Polar residues-rich tracts occupy residues 1399 to 1426 (SLANDTSNIPVENSSDTLLPTSPTQAIT) and 1500 to 1511 (HPTSSLALTSPD). Residues 1532–1546 (GRGRGRSRGRGAGRG) show a composition bias toward basic residues. Polar residues-rich tracts occupy residues 1555 to 1571 (GSNSSITQRTETATSLA) and 1597 to 1614 (EGSTSNPDQVSPVHSATT). Over residues 1617-1627 (RSDKAADKDLD) the composition is skewed to basic and acidic residues. Composition is skewed to polar residues over residues 1690–1699 (GPVQNQNAVS), 1706–1752 (KSPS…STVE), 1796–1806 (DASSARSTGLT), 1832–1849 (HFSQSVAPDIHSSGSLSQ), 2040–2057 (SSLSYVRSEPTASASTTA), and 2090–2110 (SEEQTNVNSKIETNSEELQAS). Residues 2248–2260 (DDADTEQDPEESV) are compositionally biased toward acidic residues. The segment covering 2438-2451 (DRPKDGTADTHMED) has biased composition (basic and acidic residues). Polar residues predominate over residues 2718 to 2735 (IDIGITSGKTCQPSSSTQ). 2 stretches are compositionally biased toward polar residues: residues 3034–3045 (KSQLADTEPSSS) and 3191–3204 (DSQLANIEPSSSPS). Over residues 3523–3538 (KTEEKDAENPSDRLDG) the composition is skewed to basic and acidic residues.

This sequence belongs to the SNF2/RAD54 helicase family. Interacts with LFY. Binds to BARD1/ROW1. Phosphorylated. In terms of tissue distribution, mostly expressed in rapidly dividing cells in the vegetative, inflorescence, and root meristems, as well as in young leaf and flower primordia. Isoform 1 is predominantly found in seedlings whereas isoform 2 is present in both seedlings and inflorescences (at protein level).

The protein localises to the cytoplasm. It is found in the nucleus. Catalytic component of the chromatin structure-remodeling complex (RSC), which is involved in transcription regulation and nucleosome positioning. Controls stem cell fate via the transcription regulation of WUS in the shoot apical meristem, by modulating its promoter. LFY-dependent repressor of the meristem identity switch from vegetative to reproductive development probably by modulating chromatin state. Involved in the regulation of floral homeotic gene expression in response to environmental stimuli. Required for carpel and ovule development, and for cotyledon separation via the regulation of CUC2 transcription. Regulates the promoters of several genes downstream of the jasmonate (JA) and ethylene (ET) signaling pathways. Required for resistance against the necrotrophic pathogen B.cinerea but not the biotrophic pathogen P.syringae. This Arabidopsis thaliana (Mouse-ear cress) protein is Chromatin structure-remodeling complex protein SYD (SYD).